The sequence spans 255 residues: Small ribosomal subunit protein uS2 (255 aa).

The protein belongs to the universal ribosomal protein uS2 family.

This Streptococcus pyogenes serotype M28 (strain MGAS6180) protein is Small ribosomal subunit protein uS2.